Reading from the N-terminus, the 480-residue chain is MALAIYNSLSRTKEIFEPLHSGVVSIYVCGPTVYGHAHLGHAKSYISFDVVVRWFRQSGYKVKYIQNITDVGHLTDDADEGEDKIMKQARLEKTDPMEIAQFYTRSFYEDMDRLGVERPNIAPTATAHIPEQIALVETLLRKGYAYEVNGNVYFSVNSFAGYGKLSGRTDQEALQSGSRVGIRSEKRDASDFALWKKAEEGHIMKWQSPWSVGYPGWHLECSAMAMKYLGETIDIHGGGMENKFPHHECEIAQSEAATGKPYVRYWMHNNMVTVNGTKMGKSLKNFVNLKELLQTRNPLALRFFILQSHYRSPLDYSEAALDAAAQGLEKLHETLRRFRHQAAGSGSLDVTPYAERFSEAMNDDFNTPIAIAVLFDLSKAINSALDSKGIVEADRAAIEAFLTIAATNTLGIASNNLADEQSNGNSMQRLDKVMQIMLELRHNARKQKDFATSDKIRDMLLAAGIEIKDTKEGAVWSVKG.

Cys-29 serves as a coordination point for Zn(2+). The short motif at 31-41 (PTVYGHAHLGH) is the 'HIGH' region element. Residues Cys-221, His-246, and Glu-250 each coordinate Zn(2+). The short motif at 278–282 (KMGKS) is the 'KMSKS' region element. ATP is bound at residue Lys-281.

This sequence belongs to the class-I aminoacyl-tRNA synthetase family. Monomer. The cofactor is Zn(2+).

Its subcellular location is the cytoplasm. It carries out the reaction tRNA(Cys) + L-cysteine + ATP = L-cysteinyl-tRNA(Cys) + AMP + diphosphate. The chain is Cysteine--tRNA ligase from Chlorobium chlorochromatii (strain CaD3).